The following is a 326-amino-acid chain: Pyruvate dehydrogenase E1 component subunit alpha (326 aa).

Heterodimer of an alpha and a beta chain. Thiamine diphosphate is required as a cofactor.

It catalyses the reaction N(6)-[(R)-lipoyl]-L-lysyl-[protein] + pyruvate + H(+) = N(6)-[(R)-S(8)-acetyldihydrolipoyl]-L-lysyl-[protein] + CO2. The pyruvate dehydrogenase complex catalyzes the overall conversion of pyruvate to acetyl-CoA and CO(2). It contains multiple copies of three enzymatic components: pyruvate dehydrogenase (E1), dihydrolipoamide acetyltransferase (E2) and lipoamide dehydrogenase (E3). In Rickettsia prowazekii (strain Madrid E), this protein is Pyruvate dehydrogenase E1 component subunit alpha (pdhA).